Reading from the N-terminus, the 154-residue chain is Mating pheromone 2 (154 aa).

The first 16 residues, 1 to 16 (MKAIFIILAILMVTQA), serve as a signal peptide directing secretion. The propeptide occupies 17 to 52 (FKMTSKVNTKLQSQIQSKFQSKNKLASTFQTSSQLK).

It is found in the secreted. Mating ciliate pheromones (or gamones) are diffusible extracellular communication signals that distinguish different intraspecific classes of cells commonly referred to as 'mating types'. They prepare the latter for conjugation by changing their cell surface properties. The polypeptide is Mating pheromone 2 (Euplotoides octocarinatus (Freshwater ciliate)).